Here is an 89-residue protein sequence, read N- to C-terminus: Small ribosomal subunit protein uS15 (89 aa).

The segment covering Met-1–Ser-18 has biased composition (basic and acidic residues). Residues Met-1 to Pro-25 are disordered.

The protein belongs to the universal ribosomal protein uS15 family. Part of the 30S ribosomal subunit. Forms a bridge to the 50S subunit in the 70S ribosome, contacting the 23S rRNA.

One of the primary rRNA binding proteins, it binds directly to 16S rRNA where it helps nucleate assembly of the platform of the 30S subunit by binding and bridging several RNA helices of the 16S rRNA. Functionally, forms an intersubunit bridge (bridge B4) with the 23S rRNA of the 50S subunit in the ribosome. The protein is Small ribosomal subunit protein uS15 of Teredinibacter turnerae (strain ATCC 39867 / T7901).